A 375-amino-acid polypeptide reads, in one-letter code: Beta sliding clamp (375 aa).

Belongs to the beta sliding clamp family. Forms a ring-shaped head-to-tail homodimer around DNA which binds and tethers DNA polymerases and other proteins to the DNA. The DNA replisome complex has a single clamp-loading complex (3 tau and 1 each of delta, delta', psi and chi subunits) which binds 3 Pol III cores (1 core on the leading strand and 2 on the lagging strand) each with a beta sliding clamp dimer. Additional proteins in the replisome are other copies of gamma, psi and chi, Ssb, DNA helicase and RNA primase.

Its subcellular location is the cytoplasm. Its function is as follows. Confers DNA tethering and processivity to DNA polymerases and other proteins. Acts as a clamp, forming a ring around DNA (a reaction catalyzed by the clamp-loading complex) which diffuses in an ATP-independent manner freely and bidirectionally along dsDNA. Initially characterized for its ability to contact the catalytic subunit of DNA polymerase III (Pol III), a complex, multichain enzyme responsible for most of the replicative synthesis in bacteria; Pol III exhibits 3'-5' exonuclease proofreading activity. The beta chain is required for initiation of replication as well as for processivity of DNA replication. In Synechococcus elongatus (strain ATCC 33912 / PCC 7942 / FACHB-805) (Anacystis nidulans R2), this protein is Beta sliding clamp (dnaN).